A 352-amino-acid polypeptide reads, in one-letter code: ADP-ribosylation factor GTPase-activating protein GCS1 (352 aa).

An Arf-GAP domain is found at 11 to 127 (RRRLLQLQKI…LTCLCEDRVF (117 aa)). Residues 26–49 (CMDCGAPNPQWATPKFGAFICLEC) form a C4-type zinc finger. Residues 138-151 (SKLSATSQTAASAT) show a composition bias toward low complexity. Disordered stretches follow at residues 138–181 (SKLS…ANFQ) and 196–231 (NQSRPDHLPPSQGGKYQGFGSTPAKPPQERSAGSSN). Threonine 151 is modified (phosphothreonine). Serine 157 is modified (phosphoserine). At threonine 161 the chain carries Phosphothreonine. Position 168 is a phosphoserine (serine 168). Residues 168-179 (SATPANSSNGAN) show a composition bias toward polar residues. The residue at position 170 (threonine 170) is a Phosphothreonine. Position 260 is a phosphoserine (serine 260). A compositionally biased stretch (polar residues) spans 315–330 (NGNAEDSSTAGNTTHT). The interval 315-352 (NGNAEDSSTAGNTTHTEYQKIDNNDKKNEQDEDKWDDF) is disordered. Residues 331–343 (EYQKIDNNDKKNE) are compositionally biased toward basic and acidic residues.

It localises to the cytoplasm. The protein localises to the mitochondrion. Its subcellular location is the perinuclear region. It is found in the golgi apparatus. Its function is as follows. GTPase-activating protein (GAP) for ARF1 and ARF2. Involved in intracellular vesicular transport. Required for transport from the trans-Golgi network. Implicated in the regulation of retrograde transport from the Golgi to the ER and in actin cytoskeletal organization. May be involved in the maintenance of mitochondrial morphology, possibly through organizing the actin cytoskeleton in Saccharomyces. The sequence is that of ADP-ribosylation factor GTPase-activating protein GCS1 (GCS1) from Saccharomyces cerevisiae (strain ATCC 204508 / S288c) (Baker's yeast).